The sequence spans 223 residues: UPF0758 protein Tgr7_0100 (223 aa).

An MPN domain is found at 102–223; that stretch reads ALTSPDDTRR…LVSFAERGLL (122 aa). Histidine 173, histidine 175, and aspartate 186 together coordinate Zn(2+). The JAMM motif motif lies at 173–186; that stretch reads HNHPSGVAEPSRSD.

Belongs to the UPF0758 family.

In Thioalkalivibrio sulfidiphilus (strain HL-EbGR7), this protein is UPF0758 protein Tgr7_0100.